The chain runs to 1058 residues: Ubiquitin-like modifier-activating enzyme 1 (1058 aa).

The segment at 1-46 is disordered; sequence MSSSPLSKKRRVSGPDPKPGSNCSSAQSVLSEVSSVPTNGMAKNGS. S2 carries the N-acetylserine modification. Phosphoserine occurs at positions 4, 13, 21, 24, and 46. Low complexity predominate over residues 24–36; sequence SSAQSVLSEVSSV. A Phosphotyrosine modification is found at Y55. A run of 2 repeats spans residues 63–199 and 459–611. Residues 63-611 form a 2 approximate repeats region; it reads GHEAMKMLQT…GTKGNVQVVI (549 aa). ATP-binding positions include A478, D504, R515, K528, and 576-577; that span reads DN. K528 bears the N6-succinyllysine mark. C632 (glycyl thioester intermediate) is an active-site residue. Position 671 is an N6-acetyllysine (K671). Position 800 is a phosphothreonine (T800). S810, S816, S820, and S835 each carry phosphoserine. An N6-acetyllysine modification is found at K980.

This sequence belongs to the ubiquitin-activating E1 family. As to quaternary structure, monomer. Interacts with GAN (via BTB domain). Post-translationally, ISGylated.

It localises to the cytoplasm. The protein resides in the mitochondrion. Its subcellular location is the nucleus. The catalysed reaction is ATP + ubiquitin + [E1 ubiquitin-activating enzyme]-L-cysteine = AMP + diphosphate + S-ubiquitinyl-[E1 ubiquitin-activating enzyme]-L-cysteine.. Its pathway is protein modification; protein ubiquitination. In terms of biological role, catalyzes the first step in ubiquitin conjugation to mark cellular proteins for degradation through the ubiquitin-proteasome system. Activates ubiquitin by first adenylating its C-terminal glycine residue with ATP, and thereafter linking this residue to the side chain of a cysteine residue in E1, yielding a ubiquitin-E1 thioester and free AMP. Essential for the formation of radiation-induced foci, timely DNA repair and for response to replication stress. Promotes the recruitment of TP53BP1 and BRCA1 at DNA damage sites. The chain is Ubiquitin-like modifier-activating enzyme 1 from Rattus norvegicus (Rat).